Here is a 492-residue protein sequence, read N- to C-terminus: Serine carboxypeptidase-like 31 (492 aa).

An N-terminal signal peptide occupies residues 1-30 (MDNYQTKNISNLLTSLCFTTLLILAPVVIC). 3 disulfide bridges follow: cysteine 105-cysteine 376, cysteine 270-cysteine 283, and cysteine 307-cysteine 344. N-linked (GlcNAc...) asparagine glycosylation occurs at asparagine 156. Residue serine 198 is part of the active site. Asparagine 221 and asparagine 271 each carry an N-linked (GlcNAc...) asparagine glycan. N-linked (GlcNAc...) asparagine glycans are attached at residues asparagine 372 and asparagine 383. Active-site residues include aspartate 413 and histidine 465.

Belongs to the peptidase S10 family. As to expression, expressed in roots, senescent leaves, stems, flowers and siliques.

The protein resides in the secreted. Its function is as follows. Probable carboxypeptidase. The protein is Serine carboxypeptidase-like 31 (SCPL31) of Arabidopsis thaliana (Mouse-ear cress).